The following is a 415-amino-acid chain: Serine hydroxymethyltransferase (415 aa).

(6S)-5,6,7,8-tetrahydrofolate-binding positions include L117 and 121-123 (GHL). K225 is subject to N6-(pyridoxal phosphate)lysine. 349 to 351 (SPF) contacts (6S)-5,6,7,8-tetrahydrofolate.

It belongs to the SHMT family. In terms of assembly, homodimer. Requires pyridoxal 5'-phosphate as cofactor.

The protein localises to the cytoplasm. It carries out the reaction (6R)-5,10-methylene-5,6,7,8-tetrahydrofolate + glycine + H2O = (6S)-5,6,7,8-tetrahydrofolate + L-serine. Its pathway is one-carbon metabolism; tetrahydrofolate interconversion. The protein operates within amino-acid biosynthesis; glycine biosynthesis; glycine from L-serine: step 1/1. Functionally, catalyzes the reversible interconversion of serine and glycine with tetrahydrofolate (THF) serving as the one-carbon carrier. This reaction serves as the major source of one-carbon groups required for the biosynthesis of purines, thymidylate, methionine, and other important biomolecules. Also exhibits THF-independent aldolase activity toward beta-hydroxyamino acids, producing glycine and aldehydes, via a retro-aldol mechanism. This is Serine hydroxymethyltransferase from Nitratiruptor sp. (strain SB155-2).